We begin with the raw amino-acid sequence, 534 residues long: T-complex protein 1 subunit gamma (534 aa).

M1 is subject to N-acetylmethionine. S257 is modified (phosphoserine). A disulfide bridge links C371 with C377.

The protein belongs to the TCP-1 chaperonin family. In terms of assembly, heterooligomeric complex of about 850 to 900 kDa that forms two stacked rings, 12 to 16 nm in diameter.

It localises to the cytoplasm. Molecular chaperone; assists the folding of proteins upon ATP hydrolysis. Known to play a role, in vitro, in the folding of actin and tubulin. In yeast may play a role in mitotic spindle formation. The protein is T-complex protein 1 subunit gamma (CCT3) of Saccharomyces cerevisiae (strain ATCC 204508 / S288c) (Baker's yeast).